The primary structure comprises 232 residues: LexA repressor (232 aa).

Residues 26 to 46 constitute a DNA-binding region (H-T-H motif); that stretch reads FDEMKDALDLRSKSGIHRLIT. Catalysis depends on for autocatalytic cleavage activity residues serine 153 and lysine 191.

It belongs to the peptidase S24 family. As to quaternary structure, homodimer.

It catalyses the reaction Hydrolysis of Ala-|-Gly bond in repressor LexA.. In terms of biological role, represses a number of genes involved in the response to DNA damage (SOS response), including recA and lexA. In the presence of single-stranded DNA, RecA interacts with LexA causing an autocatalytic cleavage which disrupts the DNA-binding part of LexA, leading to derepression of the SOS regulon and eventually DNA repair. The chain is LexA repressor from Afipia carboxidovorans (strain ATCC 49405 / DSM 1227 / KCTC 32145 / OM5) (Oligotropha carboxidovorans).